A 948-amino-acid polypeptide reads, in one-letter code: RNA polymerase-associated protein RapA (948 aa).

The 169-residue stretch at 164–332 (EVADRSAPRV…FARLRLLDPN (169 aa)) folds into the Helicase ATP-binding domain. 177–184 (DEVGLGKT) lines the ATP pocket. A DEAH box motif is present at residues 278 to 281 (DEAH). The 155-residue stretch at 473-627 (RVDWLIDTLK…TCPTGNALQH (155 aa)) folds into the Helicase C-terminal domain.

Belongs to the SNF2/RAD54 helicase family. RapA subfamily. As to quaternary structure, interacts with the RNAP. Has a higher affinity for the core RNAP than for the holoenzyme. Its ATPase activity is stimulated by binding to RNAP.

Its function is as follows. Transcription regulator that activates transcription by stimulating RNA polymerase (RNAP) recycling in case of stress conditions such as supercoiled DNA or high salt concentrations. Probably acts by releasing the RNAP, when it is trapped or immobilized on tightly supercoiled DNA. Does not activate transcription on linear DNA. Probably not involved in DNA repair. The sequence is that of RNA polymerase-associated protein RapA from Pseudomonas putida (strain ATCC 700007 / DSM 6899 / JCM 31910 / BCRC 17059 / LMG 24140 / F1).